A 167-amino-acid chain; its full sequence is Lipoprotein signal peptidase (167 aa).

Transmembrane regions (helical) follow at residues 8 to 28, 46 to 66, 68 to 88, and 101 to 121; these read TFLTLLLLASIDWVSKLVVLL, WGHFSFLIIPSFNEGAAFGLF, QYKIPLLIFRVCVILGLALFL, and IALTLILAGALGNVGDILLHG. Residues Asp125 and Asp143 contribute to the active site. A helical transmembrane segment spans residues 139 to 159; sequence FNLADAFISIGTLLLIGHLYF.

This sequence belongs to the peptidase A8 family.

It is found in the cell inner membrane. It catalyses the reaction Release of signal peptides from bacterial membrane prolipoproteins. Hydrolyzes -Xaa-Yaa-Zaa-|-(S,diacylglyceryl)Cys-, in which Xaa is hydrophobic (preferably Leu), and Yaa (Ala or Ser) and Zaa (Gly or Ala) have small, neutral side chains.. It participates in protein modification; lipoprotein biosynthesis (signal peptide cleavage). Its function is as follows. This protein specifically catalyzes the removal of signal peptides from prolipoproteins. The protein is Lipoprotein signal peptidase of Chlamydia trachomatis serovar L2 (strain ATCC VR-902B / DSM 19102 / 434/Bu).